Reading from the N-terminus, the 508-residue chain is Photosystem II CP47 reaction center protein (508 aa).

A run of 6 helical transmembrane segments spans residues 21-36 (AVHL…WAGS), 101-115 (IVLS…IWHW), 140-156 (GIHL…FGAF), 203-218 (IAAG…FHLS), 237-252 (VLSS…AFVV), and 457-472 (TFAL…HGAR).

The protein belongs to the PsbB/PsbC family. PsbB subfamily. In terms of assembly, PSII is composed of 1 copy each of membrane proteins PsbA, PsbB, PsbC, PsbD, PsbE, PsbF, PsbH, PsbI, PsbJ, PsbK, PsbL, PsbM, PsbT, PsbX, PsbY, PsbZ, Psb30/Ycf12, at least 3 peripheral proteins of the oxygen-evolving complex and a large number of cofactors. It forms dimeric complexes. The cofactor is Binds multiple chlorophylls. PSII binds additional chlorophylls, carotenoids and specific lipids..

The protein resides in the plastid. Its subcellular location is the chloroplast thylakoid membrane. Functionally, one of the components of the core complex of photosystem II (PSII). It binds chlorophyll and helps catalyze the primary light-induced photochemical processes of PSII. PSII is a light-driven water:plastoquinone oxidoreductase, using light energy to abstract electrons from H(2)O, generating O(2) and a proton gradient subsequently used for ATP formation. This chain is Photosystem II CP47 reaction center protein, found in Anthoceros angustus (Hornwort).